The following is a 228-amino-acid chain: Cytidylate kinase (228 aa).

Glycine 17–threonine 25 is an ATP binding site.

The protein belongs to the cytidylate kinase family. Type 1 subfamily.

The protein localises to the cytoplasm. The catalysed reaction is CMP + ATP = CDP + ADP. The enzyme catalyses dCMP + ATP = dCDP + ADP. This chain is Cytidylate kinase, found in Burkholderia multivorans (strain ATCC 17616 / 249).